Here is a 1213-residue protein sequence, read N- to C-terminus: Genetic suppressor element 1 (1213 aa).

The tract at residues 1–154 (MKGMSHEPKS…GSRGSSSGRE (154 aa)) is disordered. Serine 10 carries the phosphoserine modification. Residues 15 to 33 (MLSTATRTTATVNPLTPSP) show a composition bias toward polar residues. Composition is skewed to low complexity over residues 51–63 (SAQA…FAAA) and 76–89 (GSSL…VSSP). A phosphoserine mark is found at serine 84 and serine 95. The segment covering 103–114 (VPMGPIIVPPGG) has biased composition (low complexity). Asymmetric dimethylarginine is present on arginine 305. Positions 319–402 (HSERMSSLSA…REKELLAAKA (84 aa)) form a coiled coil. Residues 326 to 384 (LSAERLQMDEELRREREREREREREADREREKEREREQREKEREKELEREREKEREREL) are disordered. Residues 331 to 384 (LQMDEELRREREREREREREADREREKEREREQREKEREKELEREREKEREREL) are compositionally biased toward basic and acidic residues. The residue at position 433 (threonine 433) is a Phosphothreonine. Lysine 496 is modified (N6-acetyllysine). Disordered stretches follow at residues 527–579 (LDLG…QHTV) and 630–719 (SEKA…TARG). 2 stretches are compositionally biased toward basic and acidic residues: residues 537 to 560 (EAEH…REPP) and 630 to 643 (SEKA…EATP). Residues 648–657 (QPPPPPPPPR) are compositionally biased toward pro residues. A compositionally biased stretch (polar residues) spans 681–700 (STQTILGQQRPSLSQATSFG). The residue at position 739 (lysine 739) is an N6-acetyllysine. Phosphoserine is present on residues serine 766, serine 826, serine 828, and serine 857. 3 disordered regions span residues 816-858 (RKRR…NNSP), 898-979 (LSAA…EAPG), and 1065-1118 (ELQS…PRRQ). The segment covering 847–858 (TRYSPDEMNNSP) has biased composition (polar residues). Threonine 905 carries the phosphothreonine modification. Serine 907 carries the phosphoserine modification. Polar residues predominate over residues 1065–1081 (ELQSSSRVPLPQHNGQQ). A coiled-coil region spans residues 1093 to 1197 (QEADQDSEED…ELDHLRKCLA (105 aa)). A compositionally biased stretch (acidic residues) spans 1095–1112 (ADQDSEEDSEEDSEEEAE). Serine 1099 carries the post-translational modification Phosphoserine.

As to quaternary structure, may be a component of a BHC histone deacetylase complex that contains HDAC1, HDAC2, HMG20B/BRAF35, KDM1A, RCOR1/CoREST, PHF21A/BHC80, ZMYM2, ZNF217, ZMYM3, GSE1 and GTF2I.

This Mus musculus (Mouse) protein is Genetic suppressor element 1 (Gse1).